The following is a 224-amino-acid chain: Deoxyribose-phosphate aldolase (224 aa).

The active-site Proton donor/acceptor is aspartate 92. Lysine 155 serves as the catalytic Schiff-base intermediate with acetaldehyde. Residue lysine 184 is the Proton donor/acceptor of the active site.

It belongs to the DeoC/FbaB aldolase family. DeoC type 1 subfamily.

The protein localises to the cytoplasm. It carries out the reaction 2-deoxy-D-ribose 5-phosphate = D-glyceraldehyde 3-phosphate + acetaldehyde. Its pathway is carbohydrate degradation; 2-deoxy-D-ribose 1-phosphate degradation; D-glyceraldehyde 3-phosphate and acetaldehyde from 2-deoxy-alpha-D-ribose 1-phosphate: step 2/2. In terms of biological role, catalyzes a reversible aldol reaction between acetaldehyde and D-glyceraldehyde 3-phosphate to generate 2-deoxy-D-ribose 5-phosphate. This is Deoxyribose-phosphate aldolase from Clostridium perfringens (strain 13 / Type A).